The primary structure comprises 417 residues: Phosphoglycerate kinase 1 (417 aa).

(2R)-3-phosphoglycerate-binding residues include Val-23, Asp-24, Phe-25, Asn-26, Asn-38, Arg-39, Ser-62, His-63, Gly-65, Arg-66, Leu-121, Arg-122, His-168, and Arg-169. Gly-212 is an ADP binding site. Gly-212 serves as a coordination point for CDP. The AMP site is built by Ala-213 and Lys-214. Ala-213 serves as a coordination point for ATP. Residue Ala-213 coordinates Mg(2+). Asp-217 provides a ligand contact to CDP. Asp-217 provides a ligand contact to Mg(2+). Lys-218 is a binding site for AMP. Lys-218 contacts ATP. Residue Gly-236 participates in ADP binding. Gly-236 serves as a coordination point for CDP. The AMP site is built by Gly-237 and Gly-311. The ATP site is built by Gly-237 and Gly-311. CDP-binding residues include Gly-336 and Phe-341. Phe-341 is a binding site for ADP. Glu-342 is an AMP binding site. 3 residues coordinate ATP: Glu-342, Asp-374, and Thr-375. Residue Asp-374 participates in Mg(2+) binding.

Belongs to the phosphoglycerate kinase family. Monomer. It depends on Mg(2+) as a cofactor.

The protein localises to the cytoplasm. It localises to the mitochondrion. The enzyme catalyses (2R)-3-phosphoglycerate + ATP = (2R)-3-phospho-glyceroyl phosphate + ADP. It participates in carbohydrate degradation; glycolysis; pyruvate from D-glyceraldehyde 3-phosphate: step 2/5. In terms of biological role, catalyzes one of the two ATP producing reactions in the glycolytic pathway via the reversible conversion of 1,3-diphosphoglycerate to 3-phosphoglycerate. Both L- and D- forms of purine and pyrimidine nucleotides can be used as substrates, but the activity is much lower on pyrimidines. Negatively regulates the biosynthesis of acetyl-CoA from pyruvate in the mitochondrion. This is Phosphoglycerate kinase 1 (PGK1) from Rhizopus niveus.